Here is a 469-residue protein sequence, read N- to C-terminus: Adenosylhomocysteinase (469 aa).

Substrate contacts are provided by threonine 63, aspartate 139, and glutamate 164. 165-167 contributes to the NAD(+) binding site; the sequence is TTT. 2 residues coordinate substrate: lysine 194 and aspartate 198. Residues asparagine 199, 228 to 233, glutamate 251, asparagine 300, 321 to 323, and asparagine 375 contribute to the NAD(+) site; these read GYGDVG and IGH.

Belongs to the adenosylhomocysteinase family. Requires NAD(+) as cofactor.

It is found in the cytoplasm. It carries out the reaction S-adenosyl-L-homocysteine + H2O = L-homocysteine + adenosine. It participates in amino-acid biosynthesis; L-homocysteine biosynthesis; L-homocysteine from S-adenosyl-L-homocysteine: step 1/1. Functionally, may play a key role in the regulation of the intracellular concentration of adenosylhomocysteine. The protein is Adenosylhomocysteinase of Ectopseudomonas mendocina (strain ymp) (Pseudomonas mendocina).